Consider the following 205-residue polypeptide: Guanylate kinase (205 aa).

Residues 3-183 form the Guanylate kinase-like domain; that stretch reads GFVLLISGPS…SYEALRAILI (181 aa). 10–17 serves as a coordination point for ATP; the sequence is GPSGAGKS.

The protein belongs to the guanylate kinase family.

Its subcellular location is the cytoplasm. The catalysed reaction is GMP + ATP = GDP + ADP. Essential for recycling GMP and indirectly, cGMP. This is Guanylate kinase from Campylobacter jejuni (strain RM1221).